A 253-amino-acid chain; its full sequence is Ubiquinone biosynthesis O-methyltransferase (253 aa).

Residues arginine 47, glycine 78, aspartate 99, and methionine 141 each coordinate S-adenosyl-L-methionine.

This sequence belongs to the methyltransferase superfamily. UbiG/COQ3 family.

It carries out the reaction a 3-demethylubiquinol + S-adenosyl-L-methionine = a ubiquinol + S-adenosyl-L-homocysteine + H(+). The enzyme catalyses a 3-(all-trans-polyprenyl)benzene-1,2-diol + S-adenosyl-L-methionine = a 2-methoxy-6-(all-trans-polyprenyl)phenol + S-adenosyl-L-homocysteine + H(+). It participates in cofactor biosynthesis; ubiquinone biosynthesis. In terms of biological role, O-methyltransferase that catalyzes the 2 O-methylation steps in the ubiquinone biosynthetic pathway. In Rhodopseudomonas palustris (strain ATCC BAA-98 / CGA009), this protein is Ubiquinone biosynthesis O-methyltransferase.